Consider the following 738-residue polypeptide: Catalase-peroxidase 2 (738 aa).

A signal peptide spans 1–26; the sequence is MKRTLPTLSALALSMSLALAAGQTQA. Residues 104-226 constitute a cross-link (tryptophyl-tyrosyl-methioninium (Trp-Tyr) (with M-252)); the sequence is WHSAGVYRIF…LGATQMGLIY (123 aa). His105 (proton acceptor) is an active-site residue. The tryptophyl-tyrosyl-methioninium (Tyr-Met) (with W-104) cross-link spans 226–252; it reads YVNPEGPNGVPDPLAAARDIRETFGRM. His267 is a binding site for heme b.

The protein belongs to the peroxidase family. Peroxidase/catalase subfamily. In terms of assembly, homodimer or homotetramer. Heme b is required as a cofactor. Post-translationally, formation of the three residue Trp-Tyr-Met cross-link is important for the catalase, but not the peroxidase activity of the enzyme.

It catalyses the reaction H2O2 + AH2 = A + 2 H2O. It carries out the reaction 2 H2O2 = O2 + 2 H2O. Its function is as follows. Bifunctional enzyme with both catalase and broad-spectrum peroxidase activity. The chain is Catalase-peroxidase 2 from Shewanella amazonensis (strain ATCC BAA-1098 / SB2B).